An 87-amino-acid polypeptide reads, in one-letter code: NAD(P)H-quinone oxidoreductase subunit O (87 aa).

Basic and acidic residues predominate over residues 1 to 10; that stretch reads MSEQTGKVDD. The interval 1–26 is disordered; that stretch reads MSEQTGKVDDSQSPPKVQKKLRKGDL.

This sequence belongs to the complex I NdhO subunit family. As to quaternary structure, NDH-1 can be composed of about 15 different subunits; different subcomplexes with different compositions have been identified which probably have different functions.

The protein resides in the cellular thylakoid membrane. It catalyses the reaction a plastoquinone + NADH + (n+1) H(+)(in) = a plastoquinol + NAD(+) + n H(+)(out). It carries out the reaction a plastoquinone + NADPH + (n+1) H(+)(in) = a plastoquinol + NADP(+) + n H(+)(out). Functionally, NDH-1 shuttles electrons from an unknown electron donor, via FMN and iron-sulfur (Fe-S) centers, to quinones in the respiratory and/or the photosynthetic chain. The immediate electron acceptor for the enzyme in this species is believed to be plastoquinone. Couples the redox reaction to proton translocation, and thus conserves the redox energy in a proton gradient. Cyanobacterial NDH-1 also plays a role in inorganic carbon-concentration. The chain is NAD(P)H-quinone oxidoreductase subunit O from Prochlorococcus marinus (strain NATL1A).